Reading from the N-terminus, the 248-residue chain is Leucyl/phenylalanyl-tRNA--protein transferase (248 aa).

The protein belongs to the L/F-transferase family.

The protein resides in the cytoplasm. The enzyme catalyses N-terminal L-lysyl-[protein] + L-leucyl-tRNA(Leu) = N-terminal L-leucyl-L-lysyl-[protein] + tRNA(Leu) + H(+). It catalyses the reaction N-terminal L-arginyl-[protein] + L-leucyl-tRNA(Leu) = N-terminal L-leucyl-L-arginyl-[protein] + tRNA(Leu) + H(+). It carries out the reaction L-phenylalanyl-tRNA(Phe) + an N-terminal L-alpha-aminoacyl-[protein] = an N-terminal L-phenylalanyl-L-alpha-aminoacyl-[protein] + tRNA(Phe). In terms of biological role, functions in the N-end rule pathway of protein degradation where it conjugates Leu, Phe and, less efficiently, Met from aminoacyl-tRNAs to the N-termini of proteins containing an N-terminal arginine or lysine. In Ralstonia pickettii (strain 12J), this protein is Leucyl/phenylalanyl-tRNA--protein transferase.